The sequence spans 65 residues: Large ribosomal subunit protein bL35 (65 aa).

The segment at Met-1–Phe-22 is disordered. Positions Ala-10–Phe-22 are enriched in basic residues.

Belongs to the bacterial ribosomal protein bL35 family.

The protein is Large ribosomal subunit protein bL35 of Buchnera aphidicola subsp. Schizaphis graminum (strain Sg).